Here is a 326-residue protein sequence, read N- to C-terminus: DNA-directed RNA polymerase subunit alpha (326 aa).

The alpha N-terminal domain (alpha-NTD) stretch occupies residues 1 to 231; sequence MQTALLKPKI…DQLSVFAALE (231 aa). The alpha C-terminal domain (alpha-CTD) stretch occupies residues 247 to 326; that stretch reads IDPILLRPVD…ENWPPAGLEK (80 aa).

Belongs to the RNA polymerase alpha chain family. As to quaternary structure, homodimer. The RNAP catalytic core consists of 2 alpha, 1 beta, 1 beta' and 1 omega subunit. When a sigma factor is associated with the core the holoenzyme is formed, which can initiate transcription.

It catalyses the reaction RNA(n) + a ribonucleoside 5'-triphosphate = RNA(n+1) + diphosphate. DNA-dependent RNA polymerase catalyzes the transcription of DNA into RNA using the four ribonucleoside triphosphates as substrates. This Cupriavidus metallidurans (strain ATCC 43123 / DSM 2839 / NBRC 102507 / CH34) (Ralstonia metallidurans) protein is DNA-directed RNA polymerase subunit alpha.